The primary structure comprises 309 residues: Serine/threonine-protein phosphatase CPPED1 (309 aa).

A catalytic region spans residues 47–250 (WRIGDCDSGG…FSGHYHRNAG (204 aa)). A divalent metal cation-binding residues include D51, D88, N125, and H244.

It belongs to the metallophosphoesterase superfamily. CPPED1 family. It depends on a divalent metal cation as a cofactor.

The protein localises to the cytoplasm. It carries out the reaction O-phospho-L-seryl-[protein] + H2O = L-seryl-[protein] + phosphate. It catalyses the reaction O-phospho-L-threonyl-[protein] + H2O = L-threonyl-[protein] + phosphate. Its function is as follows. Protein phosphatase involved in the dephosphorylation of AKT kinase family. In Danio rerio (Zebrafish), this protein is Serine/threonine-protein phosphatase CPPED1 (cpped1).